The primary structure comprises 279 residues: Pantothenate synthetase (279 aa).

26 to 33 is an ATP binding site; the sequence is MGNLHEGH. The active-site Proton donor is His-33. (R)-pantoate is bound at residue Gln-57. Gln-57 lines the beta-alanine pocket. 144 to 147 lines the ATP pocket; that stretch reads GKKD. Residue Gln-150 participates in (R)-pantoate binding. ATP contacts are provided by residues Val-173 and 181 to 184; that span reads LSSR.

The protein belongs to the pantothenate synthetase family. As to quaternary structure, homodimer.

Its subcellular location is the cytoplasm. It catalyses the reaction (R)-pantoate + beta-alanine + ATP = (R)-pantothenate + AMP + diphosphate + H(+). Its pathway is cofactor biosynthesis; (R)-pantothenate biosynthesis; (R)-pantothenate from (R)-pantoate and beta-alanine: step 1/1. Catalyzes the condensation of pantoate with beta-alanine in an ATP-dependent reaction via a pantoyl-adenylate intermediate. The protein is Pantothenate synthetase of Burkholderia thailandensis (strain ATCC 700388 / DSM 13276 / CCUG 48851 / CIP 106301 / E264).